A 184-amino-acid polypeptide reads, in one-letter code: ATP-dependent protease subunit HslV (184 aa).

Residue T12 is part of the active site. Positions 166, 169, and 172 each coordinate Na(+).

Belongs to the peptidase T1B family. HslV subfamily. In terms of assembly, a double ring-shaped homohexamer of HslV is capped on each side by a ring-shaped HslU homohexamer. The assembly of the HslU/HslV complex is dependent on binding of ATP.

The protein resides in the cytoplasm. The enzyme catalyses ATP-dependent cleavage of peptide bonds with broad specificity.. Its activity is regulated as follows. Allosterically activated by HslU binding. Its function is as follows. Protease subunit of a proteasome-like degradation complex believed to be a general protein degrading machinery. This is ATP-dependent protease subunit HslV from Nitrobacter winogradskyi (strain ATCC 25391 / DSM 10237 / CIP 104748 / NCIMB 11846 / Nb-255).